We begin with the raw amino-acid sequence, 163 residues long: Nucleotide-binding protein Clos_1967 (163 aa).

It belongs to the YajQ family.

Nucleotide-binding protein. The polypeptide is Nucleotide-binding protein Clos_1967 (Alkaliphilus oremlandii (strain OhILAs) (Clostridium oremlandii (strain OhILAs))).